Here is a 465-residue protein sequence, read N- to C-terminus: Trigger factor (465 aa).

In terms of domain architecture, PPIase FKBP-type spans 163-248; it reads GDVINFNFKG…INKIKENQPA (86 aa). Residues 431-465 form a disordered region; the sequence is EIVNKNQNDNEIEQDKEQKDNNEEKIKQENNLENK. Over residues 443–465 the composition is skewed to basic and acidic residues; the sequence is EQDKEQKDNNEEKIKQENNLENK.

It belongs to the FKBP-type PPIase family. Tig subfamily.

It localises to the cytoplasm. It catalyses the reaction [protein]-peptidylproline (omega=180) = [protein]-peptidylproline (omega=0). In terms of biological role, involved in protein export. Acts as a chaperone by maintaining the newly synthesized protein in an open conformation. Functions as a peptidyl-prolyl cis-trans isomerase. This is Trigger factor from Mesomycoplasma hyopneumoniae (strain J / ATCC 25934 / NCTC 10110) (Mycoplasma hyopneumoniae).